A 496-amino-acid chain; its full sequence is MKVLVATAEASPFAKRGGLGDVLGALPIAIKKQSEIDIRVVLPGYSAIPSQFKSEFQPIDSIIIPLGWRAQKSRVSSYNFRNVTFYFIENDYYFNREDIYGYFDEAEQFGFFSKAILDIMPLLDFYPDIIHLNDWHTAMVSPLLKYKYAHKTNYNQMKTILTIHNLKYQGIFTPHVLEDFFDLHDHKLQHDPEYLEYHGQISFLKGGLIFSDAITTVSPTYAKEIQSPELGMGVDGLLHKRRDDLYGILNGIDYQDYNPKTDVNIYRNYNLPDEGKTNEKLINKLRLQEDLRLPVSSRVPLIAFINRLVKQKGLDLITYVLPELLESEEVQFVFLGTGDPHYEQYLSYLAEKHQNLSAQIKFDEGLARKIYAASDLFLMPSLFEPCGIGQQIAIRYGSVPIVRKVGGLHDTVYPSISEEGTRGIGFTFESFNAHEMLFTIKEAIQYYHQKAFWQEIINNLTTIDFSWEKSACEYIELYHKLIHRNTNSTRKESYLK.

Residue K15 coordinates ADP-alpha-D-glucose.

The protein belongs to the glycosyltransferase 1 family. Bacterial/plant glycogen synthase subfamily.

It catalyses the reaction [(1-&gt;4)-alpha-D-glucosyl](n) + ADP-alpha-D-glucose = [(1-&gt;4)-alpha-D-glucosyl](n+1) + ADP + H(+). It functions in the pathway glycan biosynthesis; glycogen biosynthesis. In terms of biological role, synthesizes alpha-1,4-glucan chains using ADP-glucose. This chain is Glycogen synthase, found in Natranaerobius thermophilus (strain ATCC BAA-1301 / DSM 18059 / JW/NM-WN-LF).